Consider the following 113-residue polypeptide: U11-theraphotoxin-Hhn1a (113 aa).

The first 21 residues, 1-21 (MNTVRVAFLLVFVLAVSLGQA), serve as a signal peptide directing secretion. A propeptide spanning residues 22–74 (DKDENRMEMQEKTEQGKSYLDFAENLLLQKLEEPEAKLLEEDSEESRNSRQKR) is cleaved from the precursor. Over residues 58–69 (KLLEEDSEESRN) the composition is skewed to basic and acidic residues. Positions 58–83 (KLLEEDSEESRNSRQKRCIGEGVPCD) are disordered. Disulfide bonds link Cys75–Cys90, Cys82–Cys95, and Cys89–Cys110.

This sequence belongs to the neurotoxin 14 (magi-1) family. 01 (HNTX-16) subfamily. In terms of tissue distribution, expressed by the venom gland.

It localises to the secreted. Its function is as follows. Probable ion channel inhibitor. In Cyriopagopus hainanus (Chinese bird spider), this protein is U11-theraphotoxin-Hhn1a.